Here is a 135-residue protein sequence, read N- to C-terminus: Histone H2A.4 (135 aa).

This sequence belongs to the histone H2A family. The nucleosome is a histone octamer containing two molecules each of H2A, H2B, H3 and H4 assembled in one H3-H4 heterotetramer and two H2A-H2B heterodimers. The octamer wraps approximately 147 bp of DNA. In terms of tissue distribution, expressed preferentially in meristematic tissues of young seedlings, in stigma and ovary but not in pollen.

Its subcellular location is the nucleus. The protein resides in the chromosome. Its function is as follows. Core component of nucleosome. Nucleosomes wrap and compact DNA into chromatin, limiting DNA accessibility to the cellular machineries which require DNA as a template. Histones thereby play a central role in transcription regulation, DNA repair, DNA replication and chromosomal stability. DNA accessibility is regulated via a complex set of post-translational modifications of histones, also called histone code, and nucleosome remodeling. In Triticum aestivum (Wheat), this protein is Histone H2A.4 (TH254).